Reading from the N-terminus, the 371-residue chain is Bifunctional enzyme IspD/IspF (371 aa).

Positions 1–210 (MLDISLIMLS…LNLPKPSWDI (210 aa)) are 2-C-methyl-D-erythritol 4-phosphate cytidylyltransferase. A 2-C-methyl-D-erythritol 2,4-cyclodiphosphate synthase region spans residues 211-371 (FNGNGFDVHE…NLKYFDWMKL (161 aa)). A divalent metal cation-binding residues include D217 and H219. 4-CDP-2-C-methyl-D-erythritol 2-phosphate-binding positions include 217-219 (DVH) and 243-244 (HS). H251 serves as a coordination point for a divalent metal cation. 4-CDP-2-C-methyl-D-erythritol 2-phosphate contacts are provided by residues 265-267 (DIG), 270-274 (FPDND), 341-344 (TTTE), F348, and R351.

The protein in the N-terminal section; belongs to the IspD/TarI cytidylyltransferase family. IspD subfamily. In the C-terminal section; belongs to the IspF family. It depends on a divalent metal cation as a cofactor.

It catalyses the reaction 2-C-methyl-D-erythritol 4-phosphate + CTP + H(+) = 4-CDP-2-C-methyl-D-erythritol + diphosphate. The catalysed reaction is 4-CDP-2-C-methyl-D-erythritol 2-phosphate = 2-C-methyl-D-erythritol 2,4-cyclic diphosphate + CMP. Its pathway is isoprenoid biosynthesis; isopentenyl diphosphate biosynthesis via DXP pathway; isopentenyl diphosphate from 1-deoxy-D-xylulose 5-phosphate: step 2/6. The protein operates within isoprenoid biosynthesis; isopentenyl diphosphate biosynthesis via DXP pathway; isopentenyl diphosphate from 1-deoxy-D-xylulose 5-phosphate: step 4/6. Functionally, bifunctional enzyme that catalyzes the formation of 4-diphosphocytidyl-2-C-methyl-D-erythritol from CTP and 2-C-methyl-D-erythritol 4-phosphate (MEP) (IspD), and catalyzes the conversion of 4-diphosphocytidyl-2-C-methyl-D-erythritol 2-phosphate (CDP-ME2P) to 2-C-methyl-D-erythritol 2,4-cyclodiphosphate (ME-CPP) with a corresponding release of cytidine 5-monophosphate (CMP) (IspF). The sequence is that of Bifunctional enzyme IspD/IspF from Campylobacter lari (strain RM2100 / D67 / ATCC BAA-1060).